Here is a 1121-residue protein sequence, read N- to C-terminus: uncharacterized protein (1121 aa).

The interval 179–198 (GPGECQSVHNQSSGSGSNSY) is disordered. 6 N-linked (GlcNAc...) asparagine; by host glycosylation sites follow: N188, N325, N351, N449, N561, and N615. Disordered regions lie at residues 649–684 (KRIH…RIHN) and 701–734 (STRQ…TDSD). Positions 701 to 715 (STRQDASGGSSSGTK) are enriched in polar residues. N-linked (GlcNAc...) asparagine; by host glycosylation is found at N838, N911, N914, and N980.

The protein belongs to the herpesviridae US22 family.

This is an uncharacterized protein from Homo sapiens (Human).